The chain runs to 401 residues: Pectate lyase (401 aa).

The first 20 residues, 1–20, serve as a signal peptide directing secretion; sequence MATTILPLILFISSLAIASS. A glycan (N-linked (GlcNAc...) asparagine) is linked at asparagine 38. Residues aspartate 199, aspartate 223, and aspartate 227 each contribute to the Ca(2+) site. Residue arginine 279 is part of the active site.

Belongs to the polysaccharide lyase 1 family. Ca(2+) is required as a cofactor. In terms of tissue distribution, expressed in sites of vascular differentiation and in new primordia on the flank of the shoot meristem.

It catalyses the reaction Eliminative cleavage of (1-&gt;4)-alpha-D-galacturonan to give oligosaccharides with 4-deoxy-alpha-D-galact-4-enuronosyl groups at their non-reducing ends.. It participates in glycan metabolism; pectin degradation; 2-dehydro-3-deoxy-D-gluconate from pectin: step 2/5. In terms of biological role, involved in the degradation of pectin. May assist in the removal and modification of an existing pectin matrix in order to allow the deposition of newly synthesized walls polymers for a specialized function or to create an architecture that is extensible. The sequence is that of Pectate lyase from Zinnia elegans (Garden zinnia).